The primary structure comprises 236 residues: Phycobilisome rod-core linker polypeptide cpcG (236 aa).

The PBS-linker domain occupies 11–193 (STQNQRVNGF…LDYNFLYKKN (183 aa)).

It belongs to the phycobilisome linker protein family. The phycobilisome is a hemidiscoidal structure that is composed of two distinct substructures: a core complex and a number of rods radiating from the core.

Its subcellular location is the plastid. It is found in the chloroplast. The protein resides in the chloroplast thylakoid membrane. Functionally, rod-core linker protein required for attachment of phycocyanin to allophycocyanin in cores of phycobilisomes. In terms of biological role, linker polypeptides determine the state of aggregation and the location of the disk-shaped phycobiliprotein units within the phycobilisome and modulate their spectroscopic properties in order to mediate a directed and optimal energy transfer. The protein is Phycobilisome rod-core linker polypeptide cpcG (cpcG) of Aglaothamnion neglectum (Red alga).